Consider the following 172-residue polypeptide: RTX-I toxin-activating lysine-acyltransferase ApxIC (172 aa).

Catalysis depends on residues histidine 24 and aspartate 93.

It belongs to the RTX toxin acyltransferase family. As to quaternary structure, homodimer.

The protein localises to the cytoplasm. The catalysed reaction is a fatty acyl-[ACP] + L-lysyl-[protein] = N(6)-(fatty acyl)-L-lysyl-[protein] + holo-[ACP] + H(+). Functionally, protein-lysine acyltransferase that catalyzes fatty acylation of the protoxin, thereby converting it to the active toxin. The chain is RTX-I toxin-activating lysine-acyltransferase ApxIC from Actinobacillus pleuropneumoniae (Haemophilus pleuropneumoniae).